Reading from the N-terminus, the 204-residue chain is Large ribosomal subunit protein eL15 (204 aa).

The segment at 155-204 (VHKHREQRGLTSAGRKSRGLGKGWRFSATRGGSQAKNWKRKNTKVFHRKR) is disordered. Residues 191–204 (NWKRKNTKVFHRKR) show a composition bias toward basic residues.

The protein belongs to the eukaryotic ribosomal protein eL15 family.

The polypeptide is Large ribosomal subunit protein eL15 (rpl-15) (Caenorhabditis elegans).